Reading from the N-terminus, the 907-residue chain is Potassium channel AKT3 (907 aa).

Residues 1-75 (MPTTKCAVPL…YDRRYELWNN (75 aa)) are Cytoplasmic-facing. Residues 76–96 (YLILLVVYSAWVTPFEFGFVP) form a helical membrane-spanning segment. The Extracellular portion of the chain corresponds to 97-102 (EPAGAL). A helical transmembrane segment spans residues 103-123 (AAADNAVNAFFAVDIVLTFFV). Topologically, residues 124-146 (AYTDPKTFLLQDDPRKIALRYIT) are cytoplasmic. Residues 147–167 (TWFVLDVVATIPTELARRILP) form a helical membrane-spanning segment. At 168–174 (PDLRSYG) the chain is on the extracellular side. Residues 175-195 (FFGILRLWRLHRVGILFARLE) form a helical; Voltage-sensor membrane-spanning segment. At 196–209 (KDRKFSYFWVRCVK) the chain is on the cytoplasmic side. A helical transmembrane segment spans residues 210–230 (LVCVTLFAVHCSACFYYLLAD). At 231-257 (RYPDPTNTWISAYMPNFHKASIWSRYV) the chain is on the extracellular side. The segment at residues 258–277 (ASMYWSITTLSTVGYGDMHA) is an intramembrane region (pore-forming). At 278 to 288 (ENTGEMVFTTT) the chain is on the extracellular side. Residues 289-309 (YMLFNLGLTAYIIGNMTNLVV) traverse the membrane as a helical segment. Residues 310 to 907 (HGTSRTRKFR…VPPENRSRNQ (598 aa)) lie on the Cytoplasmic side of the membrane. 388-512 (LFEGVSNDLI…TIVMNNLIQY (125 aa)) is a binding site for a nucleoside 3',5'-cyclic phosphate. ANK repeat units lie at residues 539 to 568 (DFPI…DPNE), 572 to 601 (YGRT…DSNS), 605 to 634 (EGRV…DLSG), 636 to 665 (DAAP…DVSG), and 670 to 699 (DGTT…DADA). 2 disordered regions span residues 726–779 (ATRH…TPQR) and 801–824 (GGYR…SSPP). Residues 754–776 (SSPSSSSRRGRTSSTSAASARST) show a composition bias toward low complexity. Gly residues predominate over residues 803-812 (YRGGGGGGGA). The region spanning 827 to 907 (RVAISCPESR…VPPENRSRNQ (81 aa)) is the KHA domain.

The protein belongs to the potassium channel family. Plant (TC 1.A.1.4) subfamily.

It is found in the membrane. Functionally, probable inward-rectifying potassium channel. Assuming opened or closed conformations in response to the voltage difference across the membrane, the channel is activated by hyperpolarization. The polypeptide is Potassium channel AKT3 (Oryza sativa subsp. japonica (Rice)).